Reading from the N-terminus, the 298-residue chain is Elongation factor Ts (298 aa).

Residues 78-81 (TDFV) are involved in Mg(2+) ion dislocation from EF-Tu.

This sequence belongs to the EF-Ts family.

It localises to the cytoplasm. Functionally, associates with the EF-Tu.GDP complex and induces the exchange of GDP to GTP. It remains bound to the aminoacyl-tRNA.EF-Tu.GTP complex up to the GTP hydrolysis stage on the ribosome. The protein is Elongation factor Ts of Mycoplasmopsis agalactiae (strain NCTC 10123 / CIP 59.7 / PG2) (Mycoplasma agalactiae).